Reading from the N-terminus, the 453-residue chain is Armadillo repeat-containing X-linked protein 1 (453 aa).

The Mitochondrial intermembrane portion of the chain corresponds to 1 to 6 (MGRTRE). Mitochondrion outer membrane (MOM)-targeting sequence regions lie at residues 1–6 (MGRTRE) and 26–36 (RLAWGRDENEK). The chain crosses the membrane as a helical; Signal-anchor span at residues 7 to 29 (AGCVAAGVVIGAGACYCVYRLAW). The Cytoplasmic portion of the chain corresponds to 30-453 (GRDENEKIWD…VKVLKVLTKL (424 aa)). Disordered stretches follow at residues 58-77 (AKTNAGAGSGAKLQGDSEVK) and 132-182 (ISGN…RAPA). The span at 167-177 (GKSKGKARSKS) shows a compositional bias: basic residues. ARM repeat units follow at residues 195–235 (PYKI…NNAA), 237–276 (SFNQNAIRELGGVPIIAKLIKTKDPIIREKTYNALNNLSV), 358–398 (PAMT…NIND), and 415–453 (SSLFFLFKESGVCVKKIKALANHNDLVVKVKVLKVLTKL).

This sequence belongs to the eutherian X-chromosome-specific Armcx family. As to quaternary structure, interacts with MIRO1. As to expression, expressed at high levels ovary, heart, testis, prostate, brain, spleen and colon. Expressed at very low levels in liver and thymus. Not expressed in peripheral blood leukocytes. Not or reduced expressed in lung, prostate, colon, pancreas and ovarian carcinomas.

The protein localises to the mitochondrion. It is found in the mitochondrion outer membrane. Regulates mitochondrial transport during axon regeneration. Increases the proportion of motile mitochondria by recruiting stationary mitochondria into the motile pool. Enhances mitochondria movement and neurite growth in both adult axons and embryonic neurons. Promotes neuronal survival and axon regeneration after nerve injury. May link mitochondria to the Trak1-kinesin motor complex via its interaction with MIRO1. The protein is Armadillo repeat-containing X-linked protein 1 (ARMCX1) of Homo sapiens (Human).